The sequence spans 74 residues: Putative membrane protein insertion efficiency factor (74 aa).

The protein belongs to the UPF0161 family.

It is found in the cell inner membrane. In terms of biological role, could be involved in insertion of integral membrane proteins into the membrane. The protein is Putative membrane protein insertion efficiency factor of Syntrophus aciditrophicus (strain SB).